A 233-amino-acid polypeptide reads, in one-letter code: Proteasome subunit beta type-6 (233 aa).

The propeptide at 1-12 (MDLNLDAPHSMG) is removed in mature form. Thr13 (nucleophile) is an active-site residue.

The protein belongs to the peptidase T1B family. Component of the 20S core complex of the 26S proteasome. The 26S proteasome is composed of a core protease (CP), known as the 20S proteasome, capped at one or both ends by the 19S regulatory particle (RP/PA700). The 20S proteasome core is composed of 28 subunits that are arranged in four stacked rings, resulting in a barrel-shaped structure. The two end rings are each formed by seven alpha subunits, and the two central rings are each formed by seven beta subunits. The catalytic chamber with the active sites is on the inside of the barrel.

Its subcellular location is the cytoplasm. The protein resides in the nucleus. The enzyme catalyses Cleavage of peptide bonds with very broad specificity.. Its function is as follows. The proteasome is a multicatalytic proteinase complex which is characterized by its ability to cleave peptides with Arg, Phe, Tyr, Leu, and Glu adjacent to the leaving group at neutral or slightly basic pH. The proteasome has an ATP-dependent proteolytic activity. This is Proteasome subunit beta type-6 (PBA1) from Arabidopsis thaliana (Mouse-ear cress).